The primary structure comprises 718 residues: ADP-ribosylation factor-binding protein GGA3 (718 aa).

A VHS domain is found at 16–146; sequence ATNPSNRQED…MLKRQGIVQS (131 aa). 2 positions are modified to phosphoserine: Ser159 and Ser275. Residues 171 to 298 form the GAT domain; it reads DEEKSKLLAR…VINSYKTIIE (128 aa). A unstructured hinge region spans residues 299 to 588; sequence GQIVNGEVTT…VHVPLESIKP (290 aa). Low complexity-rich tracts occupy residues 334 to 350 and 360 to 369; these read APSN…SGIP and GPPRSRSSSQ. The tract at residues 334–381 is disordered; the sequence is APSNSSPALAPPTSGIPILPPPPQTSGPPRSRSSSQAEAPPGSDSTNN. An Autoinhibitory motif is present at residues 387 to 391; sequence DEELL. 2 disordered regions span residues 395 to 455 and 477 to 506; these read LTDP…MSQA and SFMF…STSH. The region spanning 589 to 710 is the GAE domain; that stretch reads SSALPVTAYD…TELGEVDQFP (122 aa).

This sequence belongs to the GGA protein family. Monomer. Interacts with GGA1 and GGA2. Binds to clathrin and activated ARFs, such as ARF1, ARF5 and ARF6. Binds RABEP1 and RABGEF1. Interacts with the membrane proteins M6PR/CD-MPR and IGF2R/CI-MPR and the accessory proteins SYNRG, EPN4, NECAP1, NECAP2 and AFTPH/aftiphilin. Interacts with TSG101 and UBC. Interacts with ADRA2B. Interacts with NTRK1; the interaction is independent of NTRK1 activation and ubiquitination. Interacts (via VHS domain) with BACE1 (via DXXLL motif). In terms of processing, phosphorylated by CK2 and dephosphorylated by PP2A. Phosphorylation of GGA3 allows the internal DXXLL motif to bind the VHS domain and to inhibit the recognition of cargo signals. Ubiquitinated. Post-translationally, proteolytically cleaved during apoptosis by CASP3.

The protein localises to the golgi apparatus. It is found in the trans-Golgi network membrane. The protein resides in the endosome membrane. It localises to the early endosome membrane. Its subcellular location is the recycling endosome membrane. Plays a role in protein sorting and trafficking between the trans-Golgi network (TGN) and endosomes. Mediates the ARF-dependent recruitment of clathrin to the TGN and binds ubiquitinated proteins and membrane cargo molecules with a cytosolic acidic cluster-dileucine (DXXLL) motif. Its function is as follows. Plays a role in protein sorting and trafficking between the trans-Golgi network (TGN) and endosomes. Mediates the ARF-dependent recruitment of clathrin to the TGN and binds ubiquitinated proteins and membrane cargo molecules with a cytosolic acidic cluster-dileucine (DXXLL) motif. Mediates export of the GPCR receptor ADRA2B to the cell surface. Involved in BACE1 transport and sorting as well as regulation of BACE1 protein levels. Regulates retrograde transport of BACE1 from endosomes to the trans-Golgi network via interaction through the VHS motif and dependent of BACE1 phosphorylation. Modulates BACE1 protein levels independently of the interaction between VHS domain and DXXLL motif through recognition of ubiquitination. Key player in a novel DXXLL-mediated endosomal sorting machinery to the recycling pathway that targets NTRK1 to the plasma membrane. This is ADP-ribosylation factor-binding protein GGA3 (Gga3) from Mus musculus (Mouse).